The following is a 155-amino-acid chain: Small ribosomal subunit protein uS7 (155 aa).

It belongs to the universal ribosomal protein uS7 family. As to quaternary structure, part of the 30S ribosomal subunit. Contacts proteins S9 and S11.

Functionally, one of the primary rRNA binding proteins, it binds directly to 16S rRNA where it nucleates assembly of the head domain of the 30S subunit. Is located at the subunit interface close to the decoding center, probably blocks exit of the E-site tRNA. The chain is Small ribosomal subunit protein uS7 from Petrotoga mobilis (strain DSM 10674 / SJ95).